We begin with the raw amino-acid sequence, 371 residues long: Vasopressin V2 receptor (371 aa).

The segment at 1–27 (MILVSTTSAVPGALSSPSSPSNSSQEE) is disordered. At 1-38 (MILVSTTSAVPGALSSPSSPSNSSQEELLDDRDPLLVR) the chain is on the extracellular side. The span at 15 to 24 (SSPSSPSNSS) shows a compositional bias: low complexity. The N-linked (GlcNAc...) asparagine glycan is linked to asparagine 22. Residues 39–63 (AELALLSTIFVAVALSNGLVLGALI) traverse the membrane as a helical segment. Residues 64–77 (RRGRRGRWAPMHVF) are Cytoplasmic-facing. A helical membrane pass occupies residues 78 to 98 (ISHLCLADLAVALFQVLPQLA). Residues 99–113 (WDATDRFHGPDALCR) are Extracellular-facing. A helical membrane pass occupies residues 114–135 (AVKYLQMVGMYASSYMILAMTL). Topologically, residues 136 to 159 (DRHRAICRPMLAYRHGGGARWNRP) are cytoplasmic. The helical transmembrane segment at 160–180 (VLVAWAFSLLLSLPQLFIFAQ) threads the bilayer. At 181–200 (RDVGNGSGVFDCWARFAEPW) the chain is on the extracellular side. Asparagine 185 is a glycosylation site (N-linked (GlcNAc...) asparagine). A helical transmembrane segment spans residues 201–220 (GLRAYVTWIALMVFVAPALG). The Cytoplasmic portion of the chain corresponds to 221–271 (IAACQVLIFREIHASLVPGPSERAGRRRRGHRTGSPSEGAHVSAAMAKTVR). Residues 240 to 259 (PSERAGRRRRGHRTGSPSEG) form a disordered region. A helical membrane pass occupies residues 272–293 (MTLVIVIVYVLCWAPFFLVQLW). The Extracellular segment spans residues 294 to 308 (AAWDPEAPLERPPFV). A helical transmembrane segment spans residues 309-328 (LLMLLASLNSCTNPWIYASF). The Cytoplasmic portion of the chain corresponds to 329-371 (SSSVSSELRSLLCCAQRHTTHSLGPQDESCATASSSLMKDTPS). S-palmitoyl cysteine attachment occurs at residues cysteine 341 and cysteine 342. Positions 349–371 (HSLGPQDESCATASSSLMKDTPS) are disordered. The span at 357–371 (SCATASSSLMKDTPS) shows a compositional bias: polar residues.

Belongs to the G-protein coupled receptor 1 family. Vasopressin/oxytocin receptor subfamily. As to quaternary structure, interacts with ARRDC4. Identified in a complex containing at least ARRDC4, V2R and HGS. Interacts with TMEM147. Highly expressed in kidney (at protein level) and moderately expressed in liver (at protein level). No or extremely low expression in left ventricule, muscle, bone and brain (at protein level).

It is found in the cell membrane. Receptor for arginine vasopressin. The activity of this receptor is mediated by G proteins which activate adenylate cyclase. Involved in renal water reabsorption. The chain is Vasopressin V2 receptor (Avpr2) from Mus musculus (Mouse).